A 347-amino-acid polypeptide reads, in one-letter code: MLTNPSQVIIRNQDSLSQHKVLVLNHEADLLPKALLDVAASVDALALDYHHYLHLAPHANSKLRCYFGHDLPHQDPLEREKYDTVIVYFPKAKPLAPYLFNLAANHLVPNGQLLVVGENKGGIKSLVKLLPEYFATGMKLDNARHCLLFGSSLEGSAPAMKLSDWVSQYQLSTPQGEISICNLVGVFSEKRLDLGTELLLSHLPTLSGRVLDFGCGAGVIAAALLKAQPSLSLECVDINAMALASCELTLAANGMTAKVYPSDGLAQTTGKFNGIISNPPFHDGLASTTSIAQNFVTDSAKQLQHNGIWQIVANRHLPYSDIIAAEFGQLKVVADNNKYKLYYFQHK.

The protein belongs to the methyltransferase superfamily. RsmC family. As to quaternary structure, monomer.

The protein resides in the cytoplasm. It catalyses the reaction guanosine(1207) in 16S rRNA + S-adenosyl-L-methionine = N(2)-methylguanosine(1207) in 16S rRNA + S-adenosyl-L-homocysteine + H(+). Specifically methylates the guanine in position 1207 of 16S rRNA in the 30S particle. The sequence is that of Ribosomal RNA small subunit methyltransferase C from Shewanella baltica (strain OS195).